The following is a 428-amino-acid chain: Adenylosuccinate synthetase (428 aa).

GTP is bound by residues 12–18 and 40–42; these read GDEGKGK and GHT. The active-site Proton acceptor is aspartate 13. 2 residues coordinate Mg(2+): aspartate 13 and glycine 40. Residues 13-16, 38-41, threonine 128, arginine 142, glutamine 222, threonine 237, and arginine 301 contribute to the IMP site; these read DEGK and NAGH. The active-site Proton donor is the histidine 41. A substrate-binding site is contributed by 297-303; the sequence is VNTGRAR. GTP-binding positions include arginine 303, 329–331, and 411–413; these read KLD and STS.

This sequence belongs to the adenylosuccinate synthetase family. In terms of assembly, homodimer. It depends on Mg(2+) as a cofactor.

The protein localises to the cytoplasm. The catalysed reaction is IMP + L-aspartate + GTP = N(6)-(1,2-dicarboxyethyl)-AMP + GDP + phosphate + 2 H(+). It participates in purine metabolism; AMP biosynthesis via de novo pathway; AMP from IMP: step 1/2. Functionally, plays an important role in the de novo pathway of purine nucleotide biosynthesis. Catalyzes the first committed step in the biosynthesis of AMP from IMP. In Caulobacter vibrioides (strain ATCC 19089 / CIP 103742 / CB 15) (Caulobacter crescentus), this protein is Adenylosuccinate synthetase.